A 527-amino-acid chain; its full sequence is Putative adhesin P1-like protein MPN_500 (527 aa).

Disordered stretches follow at residues 1–26 (MDDI…GSRS), 76–148 (GWRN…LTNY), 248–269 (ASGS…PEQS), and 468–527 (FGTD…VSGH). Residues 9-26 (TSAGSSSGTSTNTSGSRS) show a composition bias toward low complexity. The span at 82-95 (TTSGSTGNANDTKF) shows a compositional bias: polar residues. Low complexity predominate over residues 108–117 (SSGTNTSAGN). Over residues 128 to 148 (QNGQVKTSVQEATSGDNLTNY) the composition is skewed to polar residues. The span at 248 to 262 (ASGSGSNTTSSPGIG) shows a compositional bias: low complexity. A compositionally biased stretch (polar residues) spans 468-495 (FGTDHSTQPQPQSLKTTTPVFGRSSGNL). The span at 500–513 (SGGGAGGGSSGSGQ) shows a compositional bias: gly residues.

The protein belongs to the adhesin P1 family.

The sequence is that of Putative adhesin P1-like protein MPN_500 from Mycoplasma pneumoniae (strain ATCC 29342 / M129 / Subtype 1) (Mycoplasmoides pneumoniae).